A 372-amino-acid chain; its full sequence is Signal peptide peptidase-like 1 (372 aa).

Residues 1 to 6 (METLWT) lie on the Lumenal side of the membrane. Residues 7 to 27 (LLYLLEPAPATLIVTAVTVTF) form a helical membrane-spanning segment. At 28 to 54 (ASAFRALNYGKEMERNRDFSEASITLD) the chain is on the cytoplasmic side. The helical transmembrane segment at 55–77 (SSQALMIPVMSSCSLLLMFYLFS) threads the bilayer. The Lumenal segment spans residues 78–81 (SVSQ). The chain crosses the membrane as a helical span at residues 82–104 (LLTAFTAIASVSSLFYWLSPYAV). Topologically, residues 105-123 (YMKTQLGLSDPFLSRCCSK) are cytoplasmic. Residues 124-146 (SFTRIQGLLLVACAMTVVAWLIS) traverse the membrane as a helical segment. Residues 147–149 (GHW) lie on the Lumenal side of the membrane. Residues 150-167 (VLNNLLGISICIAFVSHV) form a helical membrane-spanning segment. Topologically, residues 168–171 (RLPN) are cytoplasmic. The helical transmembrane segment at 172-192 (IKICAMLLVCLFVYDIFWVFF) threads the bilayer. Aspartate 186 is a catalytic residue. Residues 193 to 257 (SERFFGANVM…GVVPGVSASD (65 aa)) lie on the Lumenal side of the membrane. Residues 258–278 (FMMLGLGDMAIPAMLLALVLC) form a helical membrane-spanning segment. Aspartate 265 is a catalytic residue. At 279-301 (FDHRKTRDVVNIFDLKSSKGHKY) the chain is on the cytoplasmic side. Residues 302–322 (IWYALPGYAIGLVAALAAGVL) form a helical membrane-spanning segment. The Lumenal portion of the chain corresponds to 323-325 (THS). A helical membrane pass occupies residues 326–346 (PQPALLYLVPSTLGPVIFMSW). The PAL motif lies at 328 to 330 (PAL). At 347–372 (RRKDLAELWEGPALSNPIEKSHEIEI) the chain is on the cytoplasmic side.

It belongs to the peptidase A22B family. Ubiquitous.

It localises to the endosome membrane. Functionally, intramembrane-cleaving aspartic protease (I-CLiP) that cleaves type II membrane signal peptides in the hydrophobic plane of the membrane. This chain is Signal peptide peptidase-like 1 (SPPL1), found in Arabidopsis thaliana (Mouse-ear cress).